The following is an 84-amino-acid chain: Envelope glycoprotein N (84 aa).

The first 26 residues, 1 to 26 (MSCKKSARQSLYVSLCLFYILVFAAA), serve as a signal peptide directing secretion. At 27–47 (TEVDFYSPECHSHTYEIVLNS) the chain is on the virion surface side. A helical membrane pass occupies residues 48–68 (FSSIWLLINLFLLLCSFAIFL). The Intravirion segment spans residues 69–84 (KYWCYKTFASETVKGY).

Belongs to the herpesviridae glycoprotein N family. Interacts (via N-terminus) with gM (via N-terminus). The gM-gN heterodimer forms the gCII complex.

Its subcellular location is the virion membrane. It is found in the host membrane. The protein resides in the host Golgi apparatus. The protein localises to the host trans-Golgi network. Envelope glycoprotein necessary for proper maturation of gM and modulation of its membrane fusion activity. Also plays a critical role in virion morphogenesis. This is Envelope glycoprotein N from Homo sapiens (Human).